The sequence spans 339 residues: Purple acid phosphatase 4 (339 aa).

Residues 1 to 31 (MSSKFDIGSLSIVMTLLICFLLLSLAPKLEA) form the signal peptide. Aspartate 53 contributes to the Fe cation binding site. N-linked (GlcNAc...) asparagine glycosylation occurs at asparagine 61. Aspartate 86 and tyrosine 89 together coordinate Fe cation. Aspartate 86 contacts Zn(2+). Zn(2+)-binding residues include asparagine 124 and histidine 218. Catalysis depends on histidine 227, which acts as the Proton donor. Histidine 253 is a binding site for Zn(2+). 253–255 (HDH) lines the substrate pocket. Histidine 255 serves as a coordination point for Fe cation. An N-linked (GlcNAc...) asparagine glycan is attached at asparagine 284.

The protein belongs to the metallophosphoesterase superfamily. Purple acid phosphatase family. Homodimer. Fe cation is required as a cofactor. It depends on Zn(2+) as a cofactor. As to expression, expressed in roots, stems, leaves, flowers and siliques.

Its subcellular location is the secreted. It catalyses the reaction a phosphate monoester + H2O = an alcohol + phosphate. The chain is Purple acid phosphatase 4 (PAP4) from Arabidopsis thaliana (Mouse-ear cress).